Reading from the N-terminus, the 1042-residue chain is Diacylglycerol lipase-alpha (1042 aa).

The Cytoplasmic portion of the chain corresponds to 1–22 (MPGIVVFRRRWSVGSDDLVLPA). A helical transmembrane segment spans residues 23–43 (IFLFLLHTTWFVILSVVLFGL). Residues 44–60 (VYNPHEACSLNLVDHGR) are Extracellular-facing. The chain crosses the membrane as a helical span at residues 61–81 (GYLGILLSCMIAEMAIIWLSM). Topologically, residues 82–101 (RGGILYTEPRDSMQYVLYVR) are cytoplasmic. Residues 102-122 (LAILVIEFIYAIVGIVWLTQY) traverse the membrane as a helical segment. At 123 to 136 (YTSCNDLTAKNVTL) the chain is on the extracellular side. Asn-133 carries an N-linked (GlcNAc...) asparagine glycan. A helical transmembrane segment spans residues 137–157 (GMVVCNWVVILSVCITVLCVF). At 158–1042 (DPTGRTFVKL…KQDELVISAR (885 aa)) the chain is on the cytoplasmic side. Catalysis depends on charge relay system residues Ser-472 and Asp-524. Phosphoserine is present on residues Ser-727, Ser-729, Ser-732, Ser-743, Ser-782, Ser-784, Ser-806, Ser-808, Ser-833, Ser-847, and Ser-952. The disordered stretch occupies residues 846–903 (LSKHSQDTQPLEAALGSGGVTPERPPSAAANDEEEEVGGGGGGPASRGELALHNGRLG). Residues 1014-1042 (LAADKIRTSTPTGHGASPAKQDELVISAR) form a disordered region. At Thr-1023 the chain carries Phosphothreonine.

It belongs to the AB hydrolase superfamily. Lipase family. Interacts (via C-terminal) with CAMK2A; leading to the phosphorylation and inhibition of DAGLA enzymatic activity. Interacts (via PPXXF motif) with HOMER1 and HOMER2; this interaction is required for DAGLA membrane localization. Requires Ca(2+) as cofactor. Phosphorylated at Ser-782 and Ser-808 by CAMK2A; phosphorylation by CAMK2A inhibits diacylglycerol lipase activity. As to expression, highly expressed in brain and pancreas.

Its subcellular location is the cell membrane. The protein resides in the postsynaptic density membrane. It is found in the early endosome membrane. It localises to the cell projection. The protein localises to the dendritic spine membrane. The catalysed reaction is a 1,2-diacyl-sn-glycerol + H2O = a 2-acylglycerol + a fatty acid + H(+). It carries out the reaction 1-octadecanoyl-2-(5Z,8Z,11Z,14Z-eicosatetraenoyl)-sn-glycerol + H2O = 2-(5Z,8Z,11Z,14Z-eicosatetraenoyl)-glycerol + octadecanoate + H(+). The enzyme catalyses 1,2-di-(9Z-octadecenoyl)-sn-glycerol + H2O = 2-(9Z-octadecenoyl)-glycerol + (9Z)-octadecenoate + H(+). It catalyses the reaction 1-(9Z-octadecenoyl)-2-(5Z,8Z,11Z,14Z-eicosatetraenoyl)-sn-glycerol + H2O = 2-(5Z,8Z,11Z,14Z-eicosatetraenoyl)-glycerol + (9Z)-octadecenoate + H(+). The catalysed reaction is 1-(9Z-octadecenoyl)-2-octadecanoyl-sn-glycerol + H2O = 2-octadecanoylglycerol + (9Z)-octadecenoate + H(+). It carries out the reaction 1-(9Z-octadecenoyl)-2-(9Z,12Z-octadecadienoyl)-sn-glycerol + H2O = 2-(9Z,12Z-octadecadienoyl)-glycerol + (9Z)-octadecenoate + H(+). The enzyme catalyses 1-(9Z-octadecenoyl)-2-O-(5Z,8Z,11Z,14Z-eicosatetraenyl)-sn-glycerol + H2O = 2-O-(5Z,8Z,11Z,14Z)-eicosatetraenylglycerol + (9Z)-octadecenoate + H(+). Inhibited by 1,2,3-triazole urea covalent inhibitors KT172, DH376 and DO34. Inhibited by p-hydroxy-mercuri-benzoate and HgCl(2), but not to PMSF. Also inhibited by RHC80267. Diacylglycerol lipase activity is inhibited by the phosphorylation of Ser-782 and Ser-808 by CAMK2A. Functionally, serine hydrolase that hydrolyzes arachidonic acid-esterified diacylglycerols (DAGs) to produce the principal endocannabinoid, 2-arachidonoylglycerol (2-AG). Preferentially hydrolyzes sn-1 fatty acids from diacylglycerols (DAG) that contain arachidonic acid (AA) esterified at the sn-2 position to biosynthesize 2-AG. Has negligible activity against other lipids including monoacylglycerols and phospholipids. Plays a key role in regulating 2-AG signaling in the central nervous system (CNS). Regulates 2-AG involved in retrograde suppression at central synapses. Supports axonal growth during development and adult neurogenesis. Plays a role for eCB signaling in the physiological regulation of anxiety and depressive behaviors. Also regulates neuroinflammatory responses in the brain, in particular, LPS-induced microglial activation. This Homo sapiens (Human) protein is Diacylglycerol lipase-alpha (DAGLA).